Consider the following 261-residue polypeptide: Recombination protein bet (261 aa).

Gene bet protein functions in general recombination and in the late, rolling-circle mode of lambda DNA replication. Has a function similar to that of E.coli recT. It is a single-stranded DNA binding protein that can promote renaturation of DNA. The chain is Recombination protein bet (bet) from Escherichia coli (Bacteriophage lambda).